A 152-amino-acid chain; its full sequence is Deoxyuridine 5'-triphosphate nucleotidohydrolase (152 aa).

Substrate contacts are provided by residues 71–73 (RSG), Asn84, 88–90 (LID), and Met98.

It belongs to the dUTPase family. Mg(2+) is required as a cofactor.

The catalysed reaction is dUTP + H2O = dUMP + diphosphate + H(+). Its pathway is pyrimidine metabolism; dUMP biosynthesis; dUMP from dCTP (dUTP route): step 2/2. Functionally, this enzyme is involved in nucleotide metabolism: it produces dUMP, the immediate precursor of thymidine nucleotides and it decreases the intracellular concentration of dUTP so that uracil cannot be incorporated into DNA. This is Deoxyuridine 5'-triphosphate nucleotidohydrolase from Hahella chejuensis (strain KCTC 2396).